The chain runs to 77 residues: Immune protein Tsi2 (77 aa).

Forms a heterotetramer with Tse2 consisting of two Tse2 dimers and two Tsi2 dimers. Formation of the complex inactivates Tse2 enzymatic activity.

In terms of biological role, immunity protein that plays a role in preventing early activation of toxin Tse2. Binds to a large surface of Tse2 and thereby occludes the active site to specifically inhibits Tse2. This Pseudomonas aeruginosa (strain ATCC 15692 / DSM 22644 / CIP 104116 / JCM 14847 / LMG 12228 / 1C / PRS 101 / PAO1) protein is Immune protein Tsi2.